Reading from the N-terminus, the 443-residue chain is Protein king tubby (443 aa).

2 disordered regions span residues Thr57–Ile85 and His98–Gly189. Residues Ala68 to Ile85 show a composition bias toward polar residues. Low complexity predominate over residues Gln113 to Gln128. The residue at position 136 (Ser136) is a Phosphoserine. A compositionally biased stretch (low complexity) spans Asn148–Ala160. Positions Asn177–Glu186 are enriched in gly residues.

It belongs to the TUB family.

It is found in the cytoplasm. The protein localises to the nucleus. It localises to the cell projection. Its subcellular location is the cilium membrane. The protein resides in the rhabdomere. In Drosophila yakuba (Fruit fly), this protein is Protein king tubby.